Consider the following 355-residue polypeptide: DNA polymerase IV (355 aa).

The UmuC domain occupies 7–188 (IIHIDMDCFY…LPVRKLFGVG (182 aa)). The Mg(2+) site is built by aspartate 11 and aspartate 106. Glutamate 107 is a catalytic residue.

This sequence belongs to the DNA polymerase type-Y family. In terms of assembly, monomer. Mg(2+) is required as a cofactor.

It is found in the cytoplasm. It carries out the reaction DNA(n) + a 2'-deoxyribonucleoside 5'-triphosphate = DNA(n+1) + diphosphate. Poorly processive, error-prone DNA polymerase involved in untargeted mutagenesis. Copies undamaged DNA at stalled replication forks, which arise in vivo from mismatched or misaligned primer ends. These misaligned primers can be extended by PolIV. Exhibits no 3'-5' exonuclease (proofreading) activity. May be involved in translesional synthesis, in conjunction with the beta clamp from PolIII. The protein is DNA polymerase IV of Legionella pneumophila subsp. pneumophila (strain Philadelphia 1 / ATCC 33152 / DSM 7513).